The following is a 219-amino-acid chain: Mucosal pentraxin (219 aa).

The signal sequence occupies residues 1–19 (MEKLIVGILFLSVLSGSVA). One can recognise a Pentraxin (PTX) domain in the interval 24-219 (KGKAFIFPQE…YVVIKPKLWP (196 aa)). A glycan (N-linked (GlcNAc...) asparagine) is linked at Asn51. Cys55 and Cys114 are oxidised to a cystine. Residues Asp77, Asn78, Glu155, Gln156, Asp157, and Gln167 each contribute to the Ca(2+) site.

This sequence belongs to the pentraxin family. As to quaternary structure, homopentamer. Pentraxin (or pentaxin) have a discoid arrangement of 5 non-covalently bound subunits. Ca(2+) serves as cofactor. Expressed in colon.

It is found in the secreted. This is Mucosal pentraxin (Mptx1) from Mus musculus (Mouse).